The following is a 157-amino-acid chain: 2-C-methyl-D-erythritol 2,4-cyclodiphosphate synthase (157 aa).

A divalent metal cation contacts are provided by Asp-8 and His-10. 4-CDP-2-C-methyl-D-erythritol 2-phosphate is bound by residues 8-10 (DVH) and 34-35 (HS). His-42 contacts a divalent metal cation. 4-CDP-2-C-methyl-D-erythritol 2-phosphate is bound by residues 56-58 (DIG), 61-65 (FPDTD), 100-106 (AQAPKMA), 132-135 (TTTE), Phe-139, and Arg-142.

Belongs to the IspF family. In terms of assembly, homotrimer. The cofactor is a divalent metal cation.

It catalyses the reaction 4-CDP-2-C-methyl-D-erythritol 2-phosphate = 2-C-methyl-D-erythritol 2,4-cyclic diphosphate + CMP. It functions in the pathway isoprenoid biosynthesis; isopentenyl diphosphate biosynthesis via DXP pathway; isopentenyl diphosphate from 1-deoxy-D-xylulose 5-phosphate: step 4/6. In terms of biological role, involved in the biosynthesis of isopentenyl diphosphate (IPP) and dimethylallyl diphosphate (DMAPP), two major building blocks of isoprenoid compounds. Catalyzes the conversion of 4-diphosphocytidyl-2-C-methyl-D-erythritol 2-phosphate (CDP-ME2P) to 2-C-methyl-D-erythritol 2,4-cyclodiphosphate (ME-CPP) with a corresponding release of cytidine 5-monophosphate (CMP). This chain is 2-C-methyl-D-erythritol 2,4-cyclodiphosphate synthase, found in Pseudomonas fluorescens (strain SBW25).